The primary structure comprises 310 residues: MLLILLSVALLALSSAESSSEDVSQEESLFLISGKPEGRRPQGGNQPQRPPPPPGKPQGPPPQGGNQSQGPPPPPGKPEGRPPQGGNQSQGPPPHPGKPERPPPQGGNQSQGPPPHPGKPESRPPQGGHQSQGPPPTPGKPEGPPPQGGNQSQGTPPPPGKPEGRPPQGGNQSQGPPPHPGKPERPPPQGGNQSHRPPPPPGKPERPPPQGGNQSQGPPPHPGKPEGPPPQEGNKSRSARSPPGKPQGPPQQEGNKPQGPPPPGKPQGPPPAGGNPQQPQAPPAGKPQGPPPPPQGGRPPRPAQGQQPPQ.

An N-terminal signal peptide occupies residues 1–16; it reads MLLILLSVALLALSSA. Residues 14–310 form a disordered region; the sequence is SSAESSSEDV…RPAQGQQPPQ (297 aa). 9 tandem repeats follow at residues 35–55, 56–76, 77–97, 98–118, 119–139, 140–160, 161–181, 182–202, and 203–223. Residues 35–234 are 9.5 X 21 AA tandem repeats of K-P-[EQ]-[GR]-[PR]-[PR]-P-Q-G-G-N-Q-[PS]-[QH]-[RG]-[PT]-P-P-[PH]-P-G; it reads KPEGRRPQGG…PEGPPPQEGN (200 aa). The segment covering 48–63 has biased composition (pro residues); it reads QRPPPPPGKPQGPPPQ. Asn66, Asn87, and Asn108 each carry an N-linked (GlcNAc...) asparagine glycan. The span at 133-147 shows a compositional bias: pro residues; the sequence is GPPPTPGKPEGPPPQ. Residues Asn150, Asn171, and Asn192 are each glycosylated (N-linked (GlcNAc...) asparagine). A compositionally biased stretch (pro residues) spans 196–210; the sequence is RPPPPPGKPERPPPQ. Asn213 carries N-linked (GlcNAc...) asparagine glycosylation. Residues 217-231 show a composition bias toward pro residues; that stretch reads GPPPHPGKPEGPPPQ. The stretch at 224–234 is one 10; truncated repeat; sequence KPEGPPPQEGN. The N-linked (GlcNAc...) asparagine glycan is linked to Asn234. Positions 258-310 are enriched in pro residues; sequence QGPPPPGKPQGPPPAGGNPQQPQAPPAGKPQGPPPPPQGGRPPRPAQGQQPPQ.

In terms of processing, N-glycosylated. Proteolytically cleaved at the tripeptide Xaa-Pro-Gln, where Xaa in the P(3) position is mostly lysine. The endoprotease may be of microbial origin. Pyroglutamate formation found on at least Gln-46, Gln-48, Gln-67, Gln-88; Gln-90; Gln-193; Gln-288 Gln-214 and Gln-295, preferentially in diabetic, and head and neck cancer patients.

It is found in the secreted. This chain is Basic salivary proline-rich protein 4 (PRB4), found in Homo sapiens (Human).